The primary structure comprises 351 residues: Prostaglandin reductase 2 (351 aa).

99–100 (FY) serves as a coordination point for substrate. Residues 165–168 (GACG), Lys-192, Tyr-208, Asn-231, 253–259 (CGQISQY), 287–289 (FLV), and Asn-337 each bind NADP(+). Position 288–290 (288–290 (LVL)) interacts with substrate.

It belongs to the NADP-dependent oxidoreductase L4BD family. As to quaternary structure, monomer. In terms of tissue distribution, widely expressed.

The protein localises to the cytoplasm. The enzyme catalyses 13,14-dihydro-15-oxo-prostaglandin E2 + NAD(+) = 15-oxoprostaglandin E2 + NADH + H(+). The catalysed reaction is 13,14-dihydro-15-oxo-prostaglandin E2 + NADP(+) = 15-oxoprostaglandin E2 + NADPH + H(+). It carries out the reaction 13,14-dihydro-15-oxo-PGF2alpha + NADP(+) = 15-oxoprostaglandin F2alpha + NADPH + H(+). It catalyses the reaction 13,14-dihydro-15-oxo-prostaglandin E1 + NADP(+) = 15-oxoprostaglandin E1 + NADPH + H(+). The enzyme catalyses 13,14-dihydro-15-oxo-prostaglandin F1alpha + NADP(+) = 15-oxoprostaglandin F1alpha + NADPH + H(+). Its function is as follows. Functions as 15-oxo-prostaglandin 13-reductase and acts on 15-keto-PGE1, 15-keto-PGE2, 15-keto-PGE1-alpha and 15-keto-PGE2-alpha with highest activity towards 15-keto-PGE2. Overexpression represses transcriptional activity of PPARG and inhibits adipocyte differentiation. The chain is Prostaglandin reductase 2 from Homo sapiens (Human).